Here is a 44-residue protein sequence, read N- to C-terminus: Antimicrobial peptide 2 (44 aa).

Disulfide bonds. Expressed in flowers but not in leaves, seeds or roots (at protein level).

Antimicrobial peptide. Active against fungal species B.cinerea (IC(50)=5.2 uM), A.niger (IC(50)=2.6 uM) and B.sorokinina (IC(50)=5.2 uM) but not against F.oxysporum, F.graminearum and P.debaryanum at concentrations below 10 uM. Inhibits growth of P.infestans at concentration between 1.3 uM and 5.2 uM. Active against bacterial species P.syringae, B.subtilis, X.campestris and C.michiganense. This chain is Antimicrobial peptide 2, found in Taraxacum officinale (Common dandelion).